The following is a 182-amino-acid chain: Probable nicotinate-nucleotide adenylyltransferase (182 aa).

It belongs to the NadD family.

The enzyme catalyses nicotinate beta-D-ribonucleotide + ATP + H(+) = deamido-NAD(+) + diphosphate. It functions in the pathway cofactor biosynthesis; NAD(+) biosynthesis; deamido-NAD(+) from nicotinate D-ribonucleotide: step 1/1. In terms of biological role, catalyzes the reversible adenylation of nicotinate mononucleotide (NaMN) to nicotinic acid adenine dinucleotide (NaAD). In Sulfurimonas denitrificans (strain ATCC 33889 / DSM 1251) (Thiomicrospira denitrificans (strain ATCC 33889 / DSM 1251)), this protein is Probable nicotinate-nucleotide adenylyltransferase.